The chain runs to 440 residues: 2-alpha-hydroxytaxane 2-O-benzoyltransferase (440 aa).

Active-site proton acceptor residues include His158 and Asp367.

The protein belongs to the plant acyltransferase family.

It catalyses the reaction 10-deacetyl-2-debenzoylbaccatin III + benzoyl-CoA = 10-deacetylbaccatin III + CoA. The protein operates within alkaloid biosynthesis; taxol biosynthesis; baccatin III from 10-deacetyl-2-debenzoylbaccatin III: step 1/2. Catalyzes the conversion of 2-debenzoyl-7,13-diacetylbaccatin III, a semisynthetic substrate, to 7,13-diacetylbaccatin III. The polypeptide is 2-alpha-hydroxytaxane 2-O-benzoyltransferase (Taxus cuspidata (Japanese yew)).